The chain runs to 688 residues: Translation initiation factor IF-2 (688 aa).

Residues 50-62 are compositionally biased toward basic and acidic residues; sequence LLSGKEKSEKTKE. The interval 50 to 95 is disordered; that stretch reads LLSGKEKSEKTKEEDDEIETTAKNPIKESINNKKSNKRDDKKEKVN. A compositionally biased stretch (low complexity) spans 72–82; sequence KNPIKESINNK. A compositionally biased stretch (basic and acidic residues) spans 86-95; it reads KRDDKKEKVN. In terms of domain architecture, tr-type G spans 187 to 354; it reads KRSPIITVMG…MILLSSEILE (168 aa). A G1 region spans residues 196 to 203; sequence GHVDHGKT. GTP is bound at residue 196–203; the sequence is GHVDHGKT. The G2 stretch occupies residues 221–225; the sequence is GITQH. Positions 242-245 are G3; sequence DTPG. Residues 242–246 and 296–299 contribute to the GTP site; these read DTPGH and NKID. Residues 296-299 form a G4 region; that stretch reads NKID. The tract at residues 332–334 is G5; the sequence is SAH.

This sequence belongs to the TRAFAC class translation factor GTPase superfamily. Classic translation factor GTPase family. IF-2 subfamily.

The protein localises to the cytoplasm. Functionally, one of the essential components for the initiation of protein synthesis. Protects formylmethionyl-tRNA from spontaneous hydrolysis and promotes its binding to the 30S ribosomal subunits. Also involved in the hydrolysis of GTP during the formation of the 70S ribosomal complex. The polypeptide is Translation initiation factor IF-2 (Clostridium botulinum (strain 657 / Type Ba4)).